Consider the following 305-residue polypeptide: 2-aminophenol 1,6-dioxygenase beta subunit (305 aa).

Fe cation-binding residues include histidine 14, histidine 63, and histidine 196.

The protein belongs to the LigB/MhpB extradiol dioxygenase family. As to quaternary structure, heterotetramer of 2 alpha and 2 beta subunits. The cofactor is Fe(2+).

It carries out the reaction 2-aminophenol + O2 = 2-aminomuconate 6-semialdehyde. With respect to regulation, strongly inhibited by CuSO(4), FeCl(3), K(3)[Fe(CN)(6)], AgNO3, HgCl(2) and MnCl(2). Its function is as follows. Component of the 2-aminophenol 1,6-dioxygenase complex that catalyzes the ring fission of 2-aminophenol to produce 2-aminomuconic 6-semialdehyde. AmnB seems to be the catalytic subunit of the complex. The enzyme is also active toward 2-amino-p-cresol, 6-amino-m-cresol, 2-amino-m-cresol, 2-amino-4,5-dimethylphenol, 2-amino-4-chlorophenol, and catechol. In Pseudomonas sp, this protein is 2-aminophenol 1,6-dioxygenase beta subunit (amnB).